A 526-amino-acid chain; its full sequence is Arylsulfatase G (526 aa).

Residues 1–16 form the signal peptide; the sequence is MGWLFLKVLLVGMVFS. Residues aspartate 44, aspartate 45, and cysteine 84 each contribute to the Ca(2+) site. Cysteine 84 acts as the Nucleophile in catalysis. Cysteine 84 bears the 3-oxoalanine (Cys) mark. N-linked (GlcNAc...) asparagine glycosylation is present at asparagine 117. Lysine 137 is a binding site for substrate. The active site involves histidine 139. Serine 162 provides a ligand contact to substrate. The N-linked (GlcNAc...) asparagine glycan is linked to asparagine 215. Histidine 251 is a binding site for substrate. The Ca(2+) site is built by aspartate 302 and asparagine 303. N-linked (GlcNAc...) asparagine glycosylation is found at asparagine 356 and asparagine 497.

Belongs to the sulfatase family. Requires Ca(2+) as cofactor. Post-translationally, N-glycosylated with both high mannose and complex type sugars. In terms of processing, the conversion to 3-oxoalanine (also known as C-formylglycine, FGly), of a serine or cysteine residue in prokaryotes and of a cysteine residue in eukaryotes, is critical for catalytic activity. 63-kDa precursor undergoes proteolytic processing in two steps, yielding two fragments in the first step (apparent molecular masses of 44 and 18 kDa). In the second step, the 44-kDa fragment is processed further to the 34- and 10-kDa chains. The 10-kDa chain is a cleavage product of the 44-kDa fragment but linked to the 18-kDa chain through a disulfide bridge.

The protein localises to the lysosome. It catalyses the reaction an aryl sulfate + H2O = a phenol + sulfate + H(+). The catalysed reaction is Hydrolysis of the 3-sulfate groups of the N-sulfo-D-glucosamine 3-O-sulfate units of heparin.. Its function is as follows. Displays arylsulfatase activity at acidic pH towards the artificial substrate p-nitrocatechol sulfate. Catalyzes the hydrolysis of the 3-sulfate groups of the N-sulfo-D-glucosamine 3-O-sulfate units of heparin. This chain is Arylsulfatase G (Arsg), found in Rattus norvegicus (Rat).